Here is a 71-residue protein sequence, read N- to C-terminus: Conotoxin ba5b (71 aa).

The first 19 residues, 1–19, serve as a signal peptide directing secretion; the sequence is MLCLPVFITLLLLVSPSAA. A propeptide spanning residues 20–52 is cleaved from the precursor; it reads LPVESELQRDLTQDSPKDFRIREPLLLSKMFDR. 2 cysteine pairs are disulfide-bonded: C54–C63 and C55–C64. C64 bears the Cysteine amide mark. Positions 66-71 are excised as a propeptide; that stretch reads RYQRGS.

The protein belongs to the conotoxin T superfamily. Expressed by the venom duct.

It localises to the secreted. In Conus bayani (Bayan's cone), this protein is Conotoxin ba5b.